The following is a 337-amino-acid chain: Mating-type protein MAT-2 (337 aa).

The segment at residues 125–193 (APRPMNCWII…EHLRQHPNYK (69 aa)) is a DNA-binding region (HMG box). Residues 171–219 (KRPWQDAAQSAKEEHLRQHPNYKYTPRKPGEKKKRQSRKSKRAAATTTA) form a disordered region. A compositionally biased stretch (basic residues) spans 200–212 (GEKKKRQSRKSKR).

It localises to the nucleus. This Cochliobolus sativus (Common root rot and spot blotch fungus) protein is Mating-type protein MAT-2 (MAT2).